The primary structure comprises 326 residues: BTB/POZ domain-containing protein At1g21780 (326 aa).

A BTB domain is found at 161–228 (TDVIIHTADG…LYGNITQEEF (68 aa)).

In terms of assembly, homodimer. Interacts with CUL3A and CUL3B.

It participates in protein modification; protein ubiquitination. Functionally, may act as a substrate-specific adapter of an E3 ubiquitin-protein ligase complex (CUL3-RBX1-BTB) which mediates the ubiquitination and subsequent proteasomal degradation of target proteins. This Arabidopsis thaliana (Mouse-ear cress) protein is BTB/POZ domain-containing protein At1g21780.